The chain runs to 122 residues: Large ribosomal subunit protein bL19 (122 aa).

Belongs to the bacterial ribosomal protein bL19 family.

Its function is as follows. This protein is located at the 30S-50S ribosomal subunit interface and may play a role in the structure and function of the aminoacyl-tRNA binding site. This is Large ribosomal subunit protein bL19 from Chlamydia abortus (strain DSM 27085 / S26/3) (Chlamydophila abortus).